Here is a 328-residue protein sequence, read N- to C-terminus: MGQDLTFKRHRRLRQTAAIRNMVRETKLHIDDLIYPIFVKEGEGVRQEVPSMPNVYQLSLDQLDAEVDEIVSLGIPAIILFGVPAEKDAVGSAAYHEHGIVQQAIRQVKESYPDLTVIADTCLCQFTDHGHCGVIEEGKILNDPSLDLLARTAVSQAKAGADIIAPSNMMDGFVAAIRAGLDSAGFTDVPVMSYAVKYASAFYGPFRDAAHSSPVFGDRKTYQMDPANRLEALREARSDVEEGADFLIVKPALSYLDIIREVKNETGLPVVAYNVSGEYSMIKAASLQGWIDEKSTVLEKLISMKRAGADLILTYFAKDVARWLNEEK.

Zn(2+) contacts are provided by cysteine 122, cysteine 124, and cysteine 132. The active-site Schiff-base intermediate with substrate is lysine 197. 5-aminolevulinate-binding residues include arginine 207 and arginine 219. Residue glutamate 235 coordinates Mg(2+). Lysine 250 functions as the Schiff-base intermediate with substrate in the catalytic mechanism. 2 residues coordinate 5-aminolevulinate: serine 276 and tyrosine 315.

Belongs to the ALAD family. In terms of assembly, homooctamer. Zn(2+) is required as a cofactor.

It catalyses the reaction 2 5-aminolevulinate = porphobilinogen + 2 H2O + H(+). It participates in porphyrin-containing compound metabolism; protoporphyrin-IX biosynthesis; coproporphyrinogen-III from 5-aminolevulinate: step 1/4. Catalyzes an early step in the biosynthesis of tetrapyrroles. Binds two molecules of 5-aminolevulinate per subunit, each at a distinct site, and catalyzes their condensation to form porphobilinogen. This Halalkalibacterium halodurans (strain ATCC BAA-125 / DSM 18197 / FERM 7344 / JCM 9153 / C-125) (Bacillus halodurans) protein is Delta-aminolevulinic acid dehydratase (hemB).